The following is a 408-amino-acid chain: Aminomethyltransferase, mitochondrial (408 aa).

Residues 1–30 (MRGGGLWQLGQSVTRRLAQAEKKVIARRCF) constitute a mitochondrion transit peptide. Substrate is bound by residues Glu-235, Arg-266, and Tyr-404.

This sequence belongs to the GcvT family. In terms of assembly, the glycine cleavage system is composed of four proteins: P, T, L and H.

The protein resides in the mitochondrion. The enzyme catalyses N(6)-[(R)-S(8)-aminomethyldihydrolipoyl]-L-lysyl-[protein] + (6S)-5,6,7,8-tetrahydrofolate = N(6)-[(R)-dihydrolipoyl]-L-lysyl-[protein] + (6R)-5,10-methylene-5,6,7,8-tetrahydrofolate + NH4(+). The glycine cleavage system catalyzes the degradation of glycine. The chain is Aminomethyltransferase, mitochondrial (GDCST) from Mesembryanthemum crystallinum (Common ice plant).